The primary structure comprises 189 residues: Transcription factor E (189 aa).

Positions 9–101 (AVKSLEIYVR…FWRIDSDTIN (93 aa)) constitute an HTH TFE/IIEalpha-type domain.

The protein belongs to the TFE family. Monomer. Interaction with RNA polymerase subunits RpoF and RpoE is necessary for Tfe stimulatory transcription activity. Able to interact with Tbp and RNA polymerase in the absence of DNA promoter. Interacts both with the preinitiation and elongation complexes.

Its function is as follows. Transcription factor that plays a role in the activation of archaeal genes transcribed by RNA polymerase. Facilitates transcription initiation by enhancing TATA-box recognition by TATA-box-binding protein (Tbp), and transcription factor B (Tfb) and RNA polymerase recruitment. Not absolutely required for transcription in vitro, but particularly important in cases where Tbp or Tfb function is not optimal. It dynamically alters the nucleic acid-binding properties of RNA polymerases by stabilizing the initiation complex and destabilizing elongation complexes. Seems to translocate with the RNA polymerase following initiation and acts by binding to the non template strand of the transcription bubble in elongation complexes. The polypeptide is Transcription factor E (Aeropyrum pernix (strain ATCC 700893 / DSM 11879 / JCM 9820 / NBRC 100138 / K1)).